Consider the following 391-residue polypeptide: Argininosuccinate synthase (391 aa).

6–14 (AYSGGLDTT) is an ATP binding site. Tyr84 is an L-citrulline binding site. Gly114 is an ATP binding site. L-aspartate contacts are provided by Thr116, Asn120, and Asp121. Asn120 serves as a coordination point for L-citrulline. Arg124, Ser171, Ser180, Glu253, and Tyr265 together coordinate L-citrulline.

It belongs to the argininosuccinate synthase family. Type 1 subfamily. Homotetramer.

It localises to the cytoplasm. The enzyme catalyses L-citrulline + L-aspartate + ATP = 2-(N(omega)-L-arginino)succinate + AMP + diphosphate + H(+). Its pathway is amino-acid biosynthesis; L-arginine biosynthesis; L-arginine from L-ornithine and carbamoyl phosphate: step 2/3. This Metallosphaera sedula (strain ATCC 51363 / DSM 5348 / JCM 9185 / NBRC 15509 / TH2) protein is Argininosuccinate synthase.